The sequence spans 75 residues: UPF0352 protein KPN78578_25810 (75 aa).

Belongs to the UPF0352 family.

The chain is UPF0352 protein KPN78578_25810 from Klebsiella pneumoniae subsp. pneumoniae (strain ATCC 700721 / MGH 78578).